Here is a 352-residue protein sequence, read N- to C-terminus: AP2/ERF and B3 domain-containing transcription factor At1g51120 (352 aa).

Positions 1 to 20 (MDEMSNVAKTTTETSGLTDS) are disordered. The segment covering 7–20 (VAKTTTETSGLTDS) has biased composition (polar residues). Residues 46-103 (KFKGVVQQQNGHWGAQIYADHRRIWLGTFKSAHEAAAAYDSASIKLRSFDANSHRNFP) constitute a DNA-binding region (AP2/ERF). The segment at residues 178–297 (FQKELTPSDV…KTFLMIDVHH (120 aa)) is a DNA-binding region (TF-B3).

The protein belongs to the AP2/ERF transcription factor family. RAV subfamily.

It localises to the nucleus. Functionally, probably acts as a transcriptional activator. Binds to the GCC-box pathogenesis-related promoter element. May be involved in the regulation of gene expression by stress factors and by components of stress signal transduction pathways. This is AP2/ERF and B3 domain-containing transcription factor At1g51120 from Arabidopsis thaliana (Mouse-ear cress).